Reading from the N-terminus, the 406-residue chain is Zinc finger protein 793 (406 aa).

Positions 8–79 constitute a KRAB domain; the sequence is VSFKDVVVGF…EAACPGCHCW (72 aa). 6 consecutive C2H2-type zinc fingers follow at residues 227–249, 255–277, 283–305, 311–333, 339–361, and 367–389; these read HVCSECGKAFCYKSEFIRHQRSH, YGCTDCGKAFSHKSTLIKHQRIH, FECFFCGKAFTQKSHRTEHQRTH, FVCSECGKSFGEKSYLNVHRKMH, YRCRECGKSFSQKSCLNKHWRTH, and YGCNECGKAFYQKPNLSRHQKIH.

Belongs to the krueppel C2H2-type zinc-finger protein family.

The protein localises to the nucleus. Its function is as follows. May be involved in transcriptional regulation. This is Zinc finger protein 793 (ZNF793) from Homo sapiens (Human).